The sequence spans 168 residues: Disulfide bond formation protein B 1 (168 aa).

At 1-14 (MNEQTSRLNRERRF) the chain is on the cytoplasmic side. Residues 15-31 (LVLLGLICLSLIGGALY) form a helical membrane-spanning segment. Over 32–49 (MQVVLGEAPCPLCILQRY) the chain is Periplasmic. Cys-41 and Cys-44 are disulfide-bonded. Residues 50–65 (ALLFIAVFAFIAAAMP) form a helical membrane-spanning segment. Residues 66 to 72 (GRRSLTF) are Cytoplasmic-facing. Residues 73 to 89 (FEALVVLSAIGGIVAAG) traverse the membrane as a helical segment. The Periplasmic segment spans residues 90 to 144 (NHVYILANPMVSCGIDTLQPIVDDLPLAKLWPLAFQVDGFCSTPYPPILGLSLAQ). Cysteines 102 and 130 form a disulfide. Residues 145–163 (WALVAFVLTAVLVPLGIYR) form a helical membrane-spanning segment. The Cytoplasmic portion of the chain corresponds to 164-168 (NRRQA).

The protein belongs to the DsbB family.

The protein localises to the cell inner membrane. Its function is as follows. Required for disulfide bond formation in some periplasmic proteins. Acts by oxidizing the DsbA protein. The polypeptide is Disulfide bond formation protein B 1 (dsbB1) (Pseudomonas putida (strain ATCC 47054 / DSM 6125 / CFBP 8728 / NCIMB 11950 / KT2440)).